We begin with the raw amino-acid sequence, 733 residues long: Catalase-peroxidase 2 (733 aa).

The tract at residues 1 to 35 (MAEAETHPPIGESQTEPAESGCPMRIKPPVEGGSN) is disordered. A cross-link (tryptophyl-tyrosyl-methioninium (Trp-Tyr) (with M-260)) is located at residues 106-234 (WHAAGTYRVE…PXXPHMGLIY (129 aa)). The active-site Proton acceptor is the H107. The segment at residues 234–260 (YVNPEGPEGNPDYLAAAIDIRETFGRM) is a cross-link (tryptophyl-tyrosyl-methioninium (Tyr-Met) (with W-106)). Position 275 (H275) interacts with heme.

Belongs to the peroxidase family. Peroxidase/catalase subfamily. Homodimer or homotetramer. Requires heme b as cofactor. Formation of the three residue Trp-Tyr-Met cross-link is important for the catalase, but not the peroxidase activity of the enzyme.

It catalyses the reaction H2O2 + AH2 = A + 2 H2O. It carries out the reaction 2 H2O2 = O2 + 2 H2O. Functionally, bifunctional enzyme with both catalase and broad-spectrum peroxidase activity. May play a role in the intracellular survival of mycobacteria. The chain is Catalase-peroxidase 2 from Mycolicibacterium fortuitum (Mycobacterium fortuitum).